The primary structure comprises 583 residues: Inactive tyrosine-protein kinase RYK (583 aa).

An N-terminal signal peptide occupies residues 1 to 18; sequence MILRYLIFFAQLWALCLA. The Extracellular portion of the chain corresponds to 19 to 173; that stretch reads NVNMFISKEE…EVDDTDSIDK (155 aa). Residues 22 to 147 form the WIF domain; sequence MFISKEEMNR…KVKLRQEKIC (126 aa). N-linked (GlcNAc...) asparagine glycosylation is found at Asn30 and Asn46. A disulfide bridge links Cys113 with Cys147. The helical transmembrane segment at 174–194 threads the bilayer; sequence AFFVIICIAAAFLLIVAATLI. At 195 to 583 the chain is on the cytoplasmic side; the sequence is CYFKRSKKED…DFNIQLSQYI (389 aa). The region spanning 281-583 is the Protein kinase domain; it reads FQSLPLDMEG…DFNIQLSQYI (303 aa). ATP contacts are provided by residues 287-295 and Lys327; that span reads DMEGTFGEV.

The protein belongs to the protein kinase superfamily. Tyr protein kinase family.

Its subcellular location is the cell membrane. It is found in the basolateral cell membrane. In terms of biological role, has no detectable kinase activity in vitro and is unlikely to function as a tyrosine kinase in vivo. Receptor which may act as a receptor for Wnt ligand mom-2. Plays a role in controlling P7.p vulva precursor cell lineage orientation during vulva development. Regulates pop-1 asymmetric distribution in P7.p and its daughter cells. Plays a role in the migration of ALM neurons during embryogenesis. This chain is Inactive tyrosine-protein kinase RYK, found in Caenorhabditis elegans.